The sequence spans 582 residues: ATP-dependent lipid A-core flippase (582 aa).

5 consecutive transmembrane segments (helical) span residues 27–47 (LIVA…MISL), 69–89 (LIIF…TYCL), 142–162 (ALVS…LMFY), 165–185 (WQLS…IGVV), and 249–269 (AAAN…VLYL). Positions 28-310 (IVAVIALVIN…LTNVTSQFQR (283 aa)) constitute an ABC transmembrane type-1 domain. The 237-residue stretch at 342-578 (VSVKDVSFTY…NGAYAQLHRI (237 aa)) folds into the ABC transporter domain. 376-383 (GRSGSGKS) contributes to the ATP binding site.

It belongs to the ABC transporter superfamily. Lipid exporter (TC 3.A.1.106) family. In terms of assembly, homodimer.

It is found in the cell inner membrane. The catalysed reaction is ATP + H2O + lipid A-core oligosaccharideSide 1 = ADP + phosphate + lipid A-core oligosaccharideSide 2.. Its function is as follows. Involved in lipopolysaccharide (LPS) biosynthesis. Translocates lipid A-core from the inner to the outer leaflet of the inner membrane. Transmembrane domains (TMD) form a pore in the inner membrane and the ATP-binding domain (NBD) is responsible for energy generation. This is ATP-dependent lipid A-core flippase from Vibrio parahaemolyticus serotype O3:K6 (strain RIMD 2210633).